The chain runs to 441 residues: COBRA-like protein 2 (441 aa).

Positions 1–28 (MNILFSRFSFLLLFLCSWTSFTFTTTEA) are cleaved as a signal peptide. N37, N162, N170, N209, N234, N249, N314, N329, and N348 each carry an N-linked (GlcNAc...) asparagine glycan. Residue N417 is the site of GPI-anchor amidated asparagine attachment. Positions 418–441 (ASPNIATSPFVILLITFLSVLILM) are cleaved as a propeptide — removed in mature form.

This sequence belongs to the COBRA family. Expressed in roots, stems, leaves, flowers and siliques.

It is found in the cell membrane. In Arabidopsis thaliana (Mouse-ear cress), this protein is COBRA-like protein 2 (COBL2).